The primary structure comprises 304 residues: Glutaminase (304 aa).

S63, N114, E158, N165, Y189, Y240, and V258 together coordinate substrate.

Belongs to the glutaminase family. Homotetramer.

The enzyme catalyses L-glutamine + H2O = L-glutamate + NH4(+). This Shewanella amazonensis (strain ATCC BAA-1098 / SB2B) protein is Glutaminase.